Here is a 424-residue protein sequence, read N- to C-terminus: CinA-like protein (424 aa).

This sequence belongs to the CinA family.

This is CinA-like protein from Shewanella amazonensis (strain ATCC BAA-1098 / SB2B).